The sequence spans 584 residues: 4-hydroxybenzoate decarboxylase subunit C (584 aa).

This sequence belongs to the UbiD family. As to quaternary structure, component of the decarboxylase complex composed of the subunits B and C (Potential). The subunit D usually found in other organisms seems to be absent.

The catalysed reaction is 4-hydroxybenzoate + H(+) = phenol + CO2. The enzyme activity is enhanced by Mg(2+), Fe(2+), Mn(2+) and Ca(2+). No stimulation is observed with Cu(2+) and Zn(2+). Functionally, catalyzes the reversible decarboxylation of 4-hydroxybenzoate. In Chlamydia pneumoniae (Chlamydophila pneumoniae), this protein is 4-hydroxybenzoate decarboxylase subunit C.